The following is a 317-amino-acid chain: Aspartate carbamoyltransferase catalytic subunit (317 aa).

R66 and T67 together coordinate carbamoyl phosphate. Residue K94 coordinates L-aspartate. Residues R116, H144, and Q147 each coordinate carbamoyl phosphate. The L-aspartate site is built by R177 and R231. G272 and P273 together coordinate carbamoyl phosphate.

Belongs to the aspartate/ornithine carbamoyltransferase superfamily. ATCase family. Heterododecamer (2C3:3R2) of six catalytic PyrB chains organized as two trimers (C3), and six regulatory PyrI chains organized as three dimers (R2).

It carries out the reaction carbamoyl phosphate + L-aspartate = N-carbamoyl-L-aspartate + phosphate + H(+). The protein operates within pyrimidine metabolism; UMP biosynthesis via de novo pathway; (S)-dihydroorotate from bicarbonate: step 2/3. Functionally, catalyzes the condensation of carbamoyl phosphate and aspartate to form carbamoyl aspartate and inorganic phosphate, the committed step in the de novo pyrimidine nucleotide biosynthesis pathway. The chain is Aspartate carbamoyltransferase catalytic subunit from Rhodopseudomonas palustris (strain BisB5).